The following is a 326-amino-acid chain: Putative ABC transporter ATP-binding protein MA_4020 (326 aa).

Positions 1 to 12 are enriched in polar residues; that stretch reads MTISTLSSSYGN. The disordered stretch occupies residues 1-34; that stretch reads MTISTLSSSYGNAQDVPAEDSDRHGSIEPGSEKA. The 236-residue stretch at 46–281 folds into the ABC transporter domain; the sequence is LEVKNLCHRY…PELLRKAHLR (236 aa). 80–87 is an ATP binding site; sequence GANGAGKS.

This sequence belongs to the ABC transporter superfamily.

It is found in the cell membrane. Its function is as follows. Probably part of an ABC transporter complex. Responsible for energy coupling to the transport system. This Methanosarcina acetivorans (strain ATCC 35395 / DSM 2834 / JCM 12185 / C2A) protein is Putative ABC transporter ATP-binding protein MA_4020.